The primary structure comprises 1217 residues: Nuclear matrix constituent protein 1 (1217 aa).

The segment covering 1–14 (MLTPQRSAWSLKSK) has biased composition (polar residues). A disordered region spans residues 1 to 45 (MLTPQRSAWSLKSKVSSEKPRSKGKGITKNLDSAATPFPPLGLLN). The stretch at 159-746 (VTDLEKALRE…KNQRAEFIKE (588 aa)) forms a coiled coil. Positions 892–904 (SEDAAANDNNPAA) are enriched in low complexity. Disordered stretches follow at residues 892 to 969 (SEDA…VVDD), 981 to 1057 (EEAK…VQAP), 1087 to 1117 (VQTKASHQASHDNNQISMGDDPALEGSHKVT), and 1152 to 1217 (ISEM…FFTT). A compositionally biased stretch (basic residues) spans 947-960 (STRRGRGGKTVRRT). Composition is skewed to polar residues over residues 986 to 1007 (SSQQNDEQSQGASVHTGGTSNT) and 1087 to 1103 (VQTKASHQASHDNNQIS). Residues 1173–1186 (EEPATPSSGSSTSG) show a composition bias toward low complexity. The segment covering 1189–1200 (GNDDDMDDDDEE) has biased composition (acidic residues).

Belongs to the CRWN family.

It localises to the nucleus matrix. It is found in the nucleus lamina. In terms of biological role, architectural component of nuclear structure that plays different roles in controlling nuclear size and morphology. Involved in the organization of multimeric complexes in the peripheral nucleoskeleton. The polypeptide is Nuclear matrix constituent protein 1 (Allium cepa (Onion)).